Here is a 169-residue protein sequence, read N- to C-terminus: Large ribosomal subunit protein uL10 (169 aa).

The protein belongs to the universal ribosomal protein uL10 family. In terms of assembly, part of the ribosomal stalk of the 50S ribosomal subunit. The N-terminus interacts with L11 and the large rRNA to form the base of the stalk. The C-terminus forms an elongated spine to which L12 dimers bind in a sequential fashion forming a multimeric L10(L12)X complex.

Its function is as follows. Forms part of the ribosomal stalk, playing a central role in the interaction of the ribosome with GTP-bound translation factors. The polypeptide is Large ribosomal subunit protein uL10 (Rickettsia peacockii (strain Rustic)).